The primary structure comprises 559 residues: Glucose-6-phosphate isomerase (559 aa).

The active-site Proton donor is E352. Active-site residues include H383 and K511.

The protein belongs to the GPI family.

It localises to the cytoplasm. It catalyses the reaction alpha-D-glucose 6-phosphate = beta-D-fructose 6-phosphate. It functions in the pathway carbohydrate biosynthesis; gluconeogenesis. It participates in carbohydrate degradation; glycolysis; D-glyceraldehyde 3-phosphate and glycerone phosphate from D-glucose: step 2/4. Catalyzes the reversible isomerization of glucose-6-phosphate to fructose-6-phosphate. This Chlorobium phaeobacteroides (strain DSM 266 / SMG 266 / 2430) protein is Glucose-6-phosphate isomerase.